The following is a 353-amino-acid chain: Methionine import ATP-binding protein MetN (353 aa).

The ABC transporter domain maps to 8-249 (LDQIDVTFHQ…PKQPLTQDFI (242 aa)). An ATP-binding site is contributed by 42 to 49 (GYSGAGKS).

The protein belongs to the ABC transporter superfamily. Methionine importer (TC 3.A.1.24) family. The complex is composed of two ATP-binding proteins (MetN), two transmembrane proteins (MetI) and a solute-binding protein (MetQ).

It is found in the cell membrane. The catalysed reaction is L-methionine(out) + ATP + H2O = L-methionine(in) + ADP + phosphate + H(+). It carries out the reaction D-methionine(out) + ATP + H2O = D-methionine(in) + ADP + phosphate + H(+). In terms of biological role, part of the ABC transporter complex MetNIQ involved in methionine import. Responsible for energy coupling to the transport system. In Streptococcus pneumoniae serotype 4 (strain ATCC BAA-334 / TIGR4), this protein is Methionine import ATP-binding protein MetN.